A 62-amino-acid chain; its full sequence is Small ribosomal subunit protein bS21 (62 aa).

The interval 43-62 is disordered; sequence EKRKRKAMALQKQRKRRSRY. Over residues 44 to 62 the composition is skewed to basic residues; the sequence is KRKRKAMALQKQRKRRSRY.

Belongs to the bacterial ribosomal protein bS21 family.

The polypeptide is Small ribosomal subunit protein bS21 (Trichodesmium erythraeum (strain IMS101)).